A 247-amino-acid polypeptide reads, in one-letter code: 14-3-3 protein gamma-A (247 aa).

It belongs to the 14-3-3 family. In terms of assembly, homodimer, and heterodimer with other family members.

It localises to the cytoplasm. Adapter protein implicated in the regulation of a large spectrum of both general and specialized signaling pathways. Binds to a large number of partners, usually by recognition of a phosphoserine or phosphothreonine motif. Binding generally results in the modulation of the activity of the binding partner. The sequence is that of 14-3-3 protein gamma-A (ywhag-a) from Xenopus laevis (African clawed frog).